Reading from the N-terminus, the 80-residue chain is Large ribosomal subunit protein bL31B (80 aa).

The protein belongs to the bacterial ribosomal protein bL31 family. Type B subfamily. In terms of assembly, part of the 50S ribosomal subunit.

This is Large ribosomal subunit protein bL31B from Xanthomonas axonopodis pv. citri (strain 306).